The sequence spans 375 residues: Odorant receptor 10 (375 aa).

A run of 6 helical transmembrane segments spans residues 32–52, 58–78, 125–145, 167–187, 250–270, and 279–299; these read ISII…GHSW, VIIK…TLIL, NLAL…FTGV, IIYL…IPFT, YICF…LFLL, and IVIV…FYWH.

The protein belongs to the insect chemoreceptor superfamily. Heteromeric odorant receptor channel (TC 1.A.69) family. Expressed in female antenna, maxillary palp and proboscis. Expressed in female body. Expressed in male tissues.

It localises to the cell membrane. Its function is as follows. Odorant receptor which complexes with Orco, a coreceptor, to form odorant-sensing units, providing sensitive and prolonged odorant signaling and calcium permeability. Can sense indole, 1-octen-3-ol, 3-methyindole and an insect repellent DEET. This chain is Odorant receptor 10, found in Aedes albopictus (Asian tiger mosquito).